The following is a 120-amino-acid chain: Holo-[acyl-carrier-protein] synthase (120 aa).

The Mg(2+) site is built by Asp-8 and Glu-58.

Belongs to the P-Pant transferase superfamily. AcpS family. Mg(2+) is required as a cofactor.

The protein resides in the cytoplasm. The enzyme catalyses apo-[ACP] + CoA = holo-[ACP] + adenosine 3',5'-bisphosphate + H(+). In terms of biological role, transfers the 4'-phosphopantetheine moiety from coenzyme A to a Ser of acyl-carrier-protein. In Anoxybacillus flavithermus (strain DSM 21510 / WK1), this protein is Holo-[acyl-carrier-protein] synthase.